Reading from the N-terminus, the 260-residue chain is MFEINVDPVAFSIGSLVVKWYGIMMALGVVALVSWIFWRIKRGANISYDTVLTAAIIAIPSGIVFAKLLHVIDAWEYYSLNPGAIFSGEGLTIFGAIIGATIGLWIYSRYSHFNLGYLLDVAVPGILLGQAIGRVGCLLNGCCYGEFGGTGCSVIYTNPATAAPYGVEVAPTQAYEIIFLLCLLTFSLFIAKKLRPDGQLFLLYISLYAAWRVAIGFVRVNDDFALGLEQAQVVGLILMAVAVPLFIYRLRKQKQTDKIT.

The next 4 helical transmembrane spans lie at 17–37, 52–72, 85–105, and 113–133; these read VVKWYGIMMALGVVALVSWIF, LTAAIIAIPSGIVFAKLLHVI, IFSGEGLTIFGAIIGATIGLW, and FNLGYLLDVAVPGILLGQAIG. Arg-134 provides a ligand contact to a 1,2-diacyl-sn-glycero-3-phospho-(1'-sn-glycerol). The next 3 helical transmembrane spans lie at 170–190, 198–218, and 227–247; these read APTQAYEIIFLLCLLTFSLFI, GQLFLLYISLYAAWRVAIGFV, and GLEQAQVVGLILMAVAVPLFI.

Belongs to the Lgt family.

Its subcellular location is the cell membrane. The enzyme catalyses L-cysteinyl-[prolipoprotein] + a 1,2-diacyl-sn-glycero-3-phospho-(1'-sn-glycerol) = an S-1,2-diacyl-sn-glyceryl-L-cysteinyl-[prolipoprotein] + sn-glycerol 1-phosphate + H(+). It functions in the pathway protein modification; lipoprotein biosynthesis (diacylglyceryl transfer). Functionally, catalyzes the transfer of the diacylglyceryl group from phosphatidylglycerol to the sulfhydryl group of the N-terminal cysteine of a prolipoprotein, the first step in the formation of mature lipoproteins. This chain is Phosphatidylglycerol--prolipoprotein diacylglyceryl transferase, found in Dehalococcoides mccartyi (strain ATCC BAA-2100 / JCM 16839 / KCTC 5957 / BAV1).